The following is a 613-amino-acid chain: Immunoglobulin superfamily member 8 (613 aa).

Positions 1–27 are cleaved as a signal peptide; it reads MGALRPTLLPPSLPLLLLLMLGMGCWA. Ig-like C2-type domains lie at 28–149, 162–286, 303–424, and 431–560; these read REVL…LRVL, PRGR…WAQI, SQLA…EAAS, and PVHV…WYQA. The Extracellular segment spans residues 28-579; the sequence is REVLVPEGPL…VYPYMHALDT (552 aa). Cysteine 49 and cysteine 127 form a disulfide bridge. Asparagine 50 is a glycosylation site (N-linked (GlcNAc...) asparagine). The segment at 155-174 is disordered; that stretch reads VSAAPPGPRGRQAPTSPPRM. A disulfide bond links cysteine 186 and cysteine 270. The EWI motif motif lies at 274–276; the sequence is EWI. 2 cysteine pairs are disulfide-bonded: cysteine 326-cysteine 406 and cysteine 462-cysteine 544. 2 N-linked (GlcNAc...) asparagine glycosylation sites follow: asparagine 327 and asparagine 463. Serine 518 bears the Phosphoserine mark. The helical transmembrane segment at 580-600 threads the bilayer; the sequence is LFVPLLVGTGVALVTGATVLG. The Cytoplasmic portion of the chain corresponds to 601–613; it reads TITCCFMKRLRKR. 2 S-palmitoyl cysteine lipidation sites follow: cysteine 604 and cysteine 605.

In terms of assembly, interacts directly with CD82, CD81/tetraspanin-28 and CD9/tetraspanin-29. Also interacts with integrin alpha-3/beta-1 and integrin alpha-4/beta-1. Interacts with HSPA8; this interaction modulates migratory and antigen-presenting capacities of dendritic cells. Expressed in brain, kidney, testis, liver and placenta with moderate expression in all other tissues. Detected on a majority of B-cells, T-cells, and natural killer cells. Expressed on dendritic cells.

The protein resides in the cell membrane. Member of the immunoglobulin superfamily (IgSF) that links tetraspanin-enriched microdomains to the actin cytoskeleton and plays several important roles in innate and adaptive immunity. Acts as an inducible receptor of HSPA8 on dendritic cells to enhance the CCL21/SLC-dependent migration of activated mature dendritic cells while attenuating their antigen-specific stimulatory capacities. In complex with alpha-actinins ACTN1 and ACTN4, regulates actin dynamics in the immune synapse and subsequent T-cell activation. Inhibits the entry of several viruses such as hepatitis C Virus (HCV) or HIV-1. Mechanistically, promotes a change in CD81 organization at the plasma membrane by significantly restricting its diffusion which in turn influences CD81 interaction with Claudin-1/CLDN1, preventing CLDN1 from acting as a co-receptor required for HCV entry. Accumulates at the presynaptic terminal, the producer cell side of the virological synapse, to prevent HIV-1 Env-mediated cell-cell fusion. Highly expressed on malignant cells with antigen presentation defects, interacts with NK receptor KIR3DL2 to suppress NK-cell cytotoxicity. May participate in the regulation of neurite outgrowth and maintenance of the neural network in the adult brain. The polypeptide is Immunoglobulin superfamily member 8 (IGSF8) (Homo sapiens (Human)).